The chain runs to 880 residues: Translation initiation factor IF-2 (880 aa).

The interval 259 to 281 (KNREEARAVGRSSKSQSKRKSST) is disordered. A tr-type G domain is found at 379–548 (SRAPVVTIMG…LLQAEVLELK (170 aa)). The tract at residues 388-395 (GHVDHGKT) is G1. Position 388 to 395 (388 to 395 (GHVDHGKT)) interacts with GTP. The tract at residues 413–417 (GITQH) is G2. The interval 434–437 (DTPG) is G3. Residues 434-438 (DTPGH) and 488-491 (NKID) contribute to the GTP site. Residues 488 to 491 (NKID) are G4. Residues 524–526 (SAK) are G5.

The protein belongs to the TRAFAC class translation factor GTPase superfamily. Classic translation factor GTPase family. IF-2 subfamily.

It is found in the cytoplasm. Functionally, one of the essential components for the initiation of protein synthesis. Protects formylmethionyl-tRNA from spontaneous hydrolysis and promotes its binding to the 30S ribosomal subunits. Also involved in the hydrolysis of GTP during the formation of the 70S ribosomal complex. The chain is Translation initiation factor IF-2 from Baumannia cicadellinicola subsp. Homalodisca coagulata.